Here is a 378-residue protein sequence, read N- to C-terminus: Quinolinate synthase (378 aa).

Residues H59 and S80 each coordinate iminosuccinate. Residue C125 participates in [4Fe-4S] cluster binding. Iminosuccinate is bound by residues 151-153 and S168; that span reads YAN. C212 contributes to the [4Fe-4S] cluster binding site. Residues 238-240 and T255 contribute to the iminosuccinate site; that span reads HPE. C309 contacts [4Fe-4S] cluster.

Belongs to the quinolinate synthase family. Type 1 subfamily. [4Fe-4S] cluster serves as cofactor.

Its subcellular location is the cytoplasm. The catalysed reaction is iminosuccinate + dihydroxyacetone phosphate = quinolinate + phosphate + 2 H2O + H(+). It participates in cofactor biosynthesis; NAD(+) biosynthesis; quinolinate from iminoaspartate: step 1/1. Functionally, catalyzes the condensation of iminoaspartate with dihydroxyacetone phosphate to form quinolinate. The polypeptide is Quinolinate synthase (Burkholderia pseudomallei (strain 1106a)).